Reading from the N-terminus, the 239-residue chain is Non-classical arabinogalactan protein 30 (239 aa).

The first 24 residues, 1-24 (MGIIGKSVSLTLFALLCFTSSVFT), serve as a signal peptide directing secretion. The N-linked (GlcNAc...) asparagine glycan is linked to N106.

It belongs to the non-classical AGP family. In terms of tissue distribution, specifically expressed in root tips.

The protein localises to the secreted. Its subcellular location is the cell wall. Its function is as follows. Proteoglycan required for the timing of seed germination. May function in the abscisic acid (ABA) response. The protein is Non-classical arabinogalactan protein 30 of Arabidopsis thaliana (Mouse-ear cress).